Consider the following 522-residue polypeptide: MKLRVRLQKRTWPLDMPEVEPTLGQLRAYLSQALPTWGYSSDARFAITLNNKDALTGDEETLASYGIVSGDLLCLILEDAIAAPNLPSSTVSEHSSVQNNDQPSLATSSSQSNIQDAQLHDSLQGQATQSEVWNDDSVSGPGQHFEAEAVPDVVDVEEGTGYYLAEPMLCSESVEGQVPHSLEILYQSADCLNPCDALIVSIHLLMLESGYIPQGTEAKAVSMPQNWRLGGVYKLQYTHPLCEGGSAALTCVPLGNLIVINATLKINSEVRSVKRLQLLPESFICKEESGENVAMIYKDLQKLSRLFKDQLVYPLLAFTRQALNLPDVFGLVVLPLELKLRIFRLLDVRSVLSLSAVCRDLCITSNDQLLWRCLYLRDFRDGSIRGRDTDWKELYKKRYKQRKEAQRGRHVMFLPSSPHPIPFYPSPLHPRPFPPSSLHPPGIIGGEYDQRLTLPYVGDPINSLIPGPGETPSQFPPLRPRFDPVGPLPGPNPILPGRGGPSDRFPLRPSRGWPTDSRLPFM.

The ubiquitin-like stretch occupies residues 1 to 87; the sequence is MKLRVRLQKR…EDAIAAPNLP (87 aa). Residues 88 to 132 are compositionally biased toward polar residues; the sequence is SSTVSEHSSVQNNDQPSLATSSSQSNIQDAQLHDSLQGQATQSEV. The interval 88–151 is disordered; the sequence is SSTVSEHSSV…GQHFEAEAVP (64 aa). Residues 91-128 form an important for interaction with PINK1 region; that stretch reads VSEHSSVQNNDQPSLATSSSQSNIQDAQLHDSLQGQAT. Residues 128–168 are important for interaction with CDK6; it reads TQSEVWNDDSVSGPGQHFEAEAVPDVVDVEEGTGYYLAEPM. The segment at 179-323 is important for dimerization and interaction with PSMF1; that stretch reads PHSLEILYQS…PLLAFTRQAL (145 aa). Residues 328–374 form the F-box domain; the sequence is VFGLVVLPLELKLRIFRLLDVRSVLSLSAVCRDLCITSNDQLLWRCL. The interval 380-522 is important for interaction with CDK6; the sequence is RDGSIRGRDT…WPTDSRLPFM (143 aa). An omega-N-methylarginine mark is found at arginine 431 and arginine 451. The RFDP motif signature appears at 481–484; the sequence is RFDP. The segment at 484 to 522 is disordered; that stretch reads PVGPLPGPNPILPGRGGPSDRFPLRPSRGWPTDSRLPFM. Arginine 518 is subject to Asymmetric dimethylarginine.

As to quaternary structure, part of the SCF (SKP1-CUL1-F-box) E3 ubiquitin-protein ligase complex SCF(FBXO7) formed of CUL1, SKP1, RBX1 and FBXO7. Interacts via its C-terminal proline-rich region with DLGAP5. Interacts with BIRC2. Interacts with CDK6 and promotes its interaction with D-type cyclin. Interacts (via the N-terminal Ubl domain) with PRKN. Interacts (via N-terminal region) with PINK1. Interacts with PSMF1.

Its subcellular location is the cytoplasm. The protein localises to the nucleus. The protein resides in the mitochondrion. It is found in the cytosol. Its pathway is protein modification; protein ubiquitination. In terms of biological role, substrate recognition component of a SCF (SKP1-CUL1-F-box protein) E3 ubiquitin-protein ligase complex which mediates the ubiquitination and subsequent proteasomal degradation of target proteins and plays a role in several biological processes such as cell cycle, cell proliferation, or maintenance of chromosome stability. Recognizes and ubiquitinates BIRC2 and the cell cycle regulator DLGAP5. Plays a role downstream of PINK1 in the clearance of damaged mitochondria via selective autophagy (mitophagy) by targeting PRKN to dysfunctional depolarized mitochondria. Promotes MFN1 ubiquitination. Mediates the ubiquitination and proteasomal degradation of UXT isoform 2, thereby impairing the NF-kappa-B signaling pathway. Inhibits NF-kappa-B pathway also by promoting the ubiquitinatioin of TRAF2. Affects the assembly state and activity of the proteasome in the cells including neurons by ubiquitinating the proteasomal subunit PSMA2 via 'Lys-63'-linked polyubiquitin chains. Promotes 'Lys-48'-linked polyubiquitination SIRT7, leading to the hydrogen peroxide-induced cell death. The polypeptide is F-box only protein 7 (FBXO7) (Bos taurus (Bovine)).